The following is a 155-amino-acid chain: Cytochrome c-type biogenesis protein CcmE (155 aa).

Topologically, residues 1–8 (MNPIRKKR) are cytoplasmic. The helical; Signal-anchor for type II membrane protein transmembrane segment at 9-29 (LYWILALLCGVSIAMALALSA) threads the bilayer. Topologically, residues 30–155 (LQENINLFYT…PKRVKQESTR (126 aa)) are periplasmic. Histidine 124 and tyrosine 128 together coordinate heme.

Belongs to the CcmE/CycJ family.

The protein resides in the cell inner membrane. Heme chaperone required for the biogenesis of c-type cytochromes. Transiently binds heme delivered by CcmC and transfers the heme to apo-cytochromes in a process facilitated by CcmF and CcmH. The protein is Cytochrome c-type biogenesis protein CcmE of Janthinobacterium sp. (strain Marseille) (Minibacterium massiliensis).